The primary structure comprises 143 residues: Putative pre-16S rRNA nuclease (143 aa).

The protein belongs to the YqgF nuclease family.

It localises to the cytoplasm. Functionally, could be a nuclease involved in processing of the 5'-end of pre-16S rRNA. This chain is Putative pre-16S rRNA nuclease, found in Leuconostoc citreum (strain KM20).